Here is a 119-residue protein sequence, read N- to C-terminus: Succinate dehydrogenase assembly factor 2, mitochondrial (119 aa).

This sequence belongs to the SDHAF2 family. As to quaternary structure, interacts with the flavoprotein subunit within the SDH catalytic dimer.

Its subcellular location is the mitochondrion matrix. Its function is as follows. Plays an essential role in the assembly of succinate dehydrogenase (SDH), an enzyme complex (also referred to as respiratory complex II) that is a component of both the tricarboxylic acid (TCA) cycle and the mitochondrial electron transport chain, and which couples the oxidation of succinate to fumarate with the reduction of ubiquinone (coenzyme Q) to ubiquinol. Required for flavinylation (covalent attachment of FAD) of the flavoprotein subunit of the SDH catalytic dimer. The polypeptide is Succinate dehydrogenase assembly factor 2, mitochondrial (Caenorhabditis elegans).